Here is a 726-residue protein sequence, read N- to C-terminus: Probable pre-mRNA-splicing factor ATP-dependent RNA helicase DEAH2 (726 aa).

The region spanning 71–240 (LKTLNNNQTL…FSGAPLMKVP (170 aa)) is the Helicase ATP-binding domain. 84–91 (GETGSGKT) is an ATP binding site. The short motif at 187–190 (DEAH) is the DEAH box element. The Helicase C-terminal domain maps to 265–445 (TVVQIHMCEP…NTVLTLKKLG (181 aa)).

Belongs to the DEAD box helicase family. DEAH subfamily. PRP43 sub-subfamily.

It catalyses the reaction ATP + H2O = ADP + phosphate + H(+). Its function is as follows. May be involved in pre-mRNA splicing. This chain is Probable pre-mRNA-splicing factor ATP-dependent RNA helicase DEAH2, found in Arabidopsis thaliana (Mouse-ear cress).